Here is a 139-residue protein sequence, read N- to C-terminus: Small ribosomal subunit protein uS12m (139 aa).

Residues 1–29 constitute a mitochondrion transit peptide; sequence MSWPGLLYGLTTSLSRGLALAPQLWAARS.

The protein belongs to the universal ribosomal protein uS12 family. Component of the mitochondrial ribosome small subunit (28S) which comprises a 12S rRNA and about 30 distinct proteins.

Its subcellular location is the mitochondrion. In Mus musculus (Mouse), this protein is Small ribosomal subunit protein uS12m (Mrps12).